The primary structure comprises 253 residues: Ubiquinone/menaquinone biosynthesis C-methyltransferase UbiE (253 aa).

Residues threonine 76, aspartate 97, and 125 to 126 contribute to the S-adenosyl-L-methionine site; that span reads NA.

It belongs to the class I-like SAM-binding methyltransferase superfamily. MenG/UbiE family.

The enzyme catalyses a 2-demethylmenaquinol + S-adenosyl-L-methionine = a menaquinol + S-adenosyl-L-homocysteine + H(+). It catalyses the reaction a 2-methoxy-6-(all-trans-polyprenyl)benzene-1,4-diol + S-adenosyl-L-methionine = a 5-methoxy-2-methyl-3-(all-trans-polyprenyl)benzene-1,4-diol + S-adenosyl-L-homocysteine + H(+). Its pathway is quinol/quinone metabolism; menaquinone biosynthesis; menaquinol from 1,4-dihydroxy-2-naphthoate: step 2/2. It functions in the pathway cofactor biosynthesis; ubiquinone biosynthesis. Functionally, methyltransferase required for the conversion of demethylmenaquinol (DMKH2) to menaquinol (MKH2) and the conversion of 2-polyprenyl-6-methoxy-1,4-benzoquinol (DDMQH2) to 2-polyprenyl-3-methyl-6-methoxy-1,4-benzoquinol (DMQH2). This is Ubiquinone/menaquinone biosynthesis C-methyltransferase UbiE from Nitrobacter hamburgensis (strain DSM 10229 / NCIMB 13809 / X14).